Here is a 66-residue protein sequence, read N- to C-terminus: MKKDIHPNYVECTVACACGNTFKTRSNKPEIKVDVCSKCHPFFTGSEKIVDSAGRVEKFNKKYGRK.

The Zn(2+) site is built by Cys-16, Cys-18, Cys-36, and Cys-39.

This sequence belongs to the bacterial ribosomal protein bL31 family. Type A subfamily. In terms of assembly, part of the 50S ribosomal subunit. Zn(2+) is required as a cofactor.

In terms of biological role, binds the 23S rRNA. This Campylobacter hominis (strain ATCC BAA-381 / DSM 21671 / CCUG 45161 / LMG 19568 / NCTC 13146 / CH001A) protein is Large ribosomal subunit protein bL31.